The primary structure comprises 97 residues: Protein CYSTEINE-RICH TRANSMEMBRANE MODULE 7 (97 aa).

A disordered region spans residues 1-27; it reads MASYHVSHDSYQSPGPSPLYQPIIEAP. Pro residues predominate over residues 15–27; that stretch reads GPSPLYQPIIEAP. Residues 68–88 form a helical membrane-spanning segment; it reads YVGCFPFLRSCLTTLCCCWFV.

It belongs to the CYSTM1 family. Homodimer and heterodimers. Interacts with CYSTM3, CYSTM4, CYSTM5, CYSTM6, CYSTM10, WIH1/CYSTM13 and CYSTM11. Binds weakly to CYSTM1, CYSTM2 and CYSTM12. As to expression, mostly expressed in siliques and, to a lower extent, in stems, roots, leaves and flowers.

Its subcellular location is the cell membrane. Functionally, involved in resistance to abiotic stress. The chain is Protein CYSTEINE-RICH TRANSMEMBRANE MODULE 7 from Arabidopsis thaliana (Mouse-ear cress).